Reading from the N-terminus, the 94-residue chain is Pyrimidine/purine nucleoside phosphorylase (94 aa).

This sequence belongs to the nucleoside phosphorylase PpnP family.

It catalyses the reaction a purine D-ribonucleoside + phosphate = a purine nucleobase + alpha-D-ribose 1-phosphate. The enzyme catalyses adenosine + phosphate = alpha-D-ribose 1-phosphate + adenine. The catalysed reaction is cytidine + phosphate = cytosine + alpha-D-ribose 1-phosphate. It carries out the reaction guanosine + phosphate = alpha-D-ribose 1-phosphate + guanine. It catalyses the reaction inosine + phosphate = alpha-D-ribose 1-phosphate + hypoxanthine. The enzyme catalyses thymidine + phosphate = 2-deoxy-alpha-D-ribose 1-phosphate + thymine. The catalysed reaction is uridine + phosphate = alpha-D-ribose 1-phosphate + uracil. It carries out the reaction xanthosine + phosphate = alpha-D-ribose 1-phosphate + xanthine. Catalyzes the phosphorolysis of diverse nucleosides, yielding D-ribose 1-phosphate and the respective free bases. Can use uridine, adenosine, guanosine, cytidine, thymidine, inosine and xanthosine as substrates. Also catalyzes the reverse reactions. The polypeptide is Pyrimidine/purine nucleoside phosphorylase (Klebsiella pneumoniae (strain 342)).